The primary structure comprises 248 residues: Sulfur carrier protein FdhD (248 aa).

The active-site Cysteine persulfide intermediate is C99. Mo-bis(molybdopterin guanine dinucleotide) is bound at residue 232–237 (FVRGKR).

Belongs to the FdhD family.

The protein localises to the cytoplasm. In terms of biological role, required for formate dehydrogenase (FDH) activity. Acts as a sulfur carrier protein that transfers sulfur from IscS to the molybdenum cofactor prior to its insertion into FDH. The polypeptide is Sulfur carrier protein FdhD (Methanothermobacter thermautotrophicus (strain ATCC 29096 / DSM 1053 / JCM 10044 / NBRC 100330 / Delta H) (Methanobacterium thermoautotrophicum)).